The sequence spans 291 residues: Homoserine kinase (291 aa).

80-90 (PLARGLGSSST) contacts ATP.

The protein belongs to the GHMP kinase family. Homoserine kinase subfamily.

Its subcellular location is the cytoplasm. The catalysed reaction is L-homoserine + ATP = O-phospho-L-homoserine + ADP + H(+). It functions in the pathway amino-acid biosynthesis; L-threonine biosynthesis; L-threonine from L-aspartate: step 4/5. Catalyzes the ATP-dependent phosphorylation of L-homoserine to L-homoserine phosphate. The polypeptide is Homoserine kinase (Lactiplantibacillus plantarum (strain ATCC BAA-793 / NCIMB 8826 / WCFS1) (Lactobacillus plantarum)).